The sequence spans 331 residues: Aspartate carbamoyltransferase catalytic subunit (331 aa).

2 residues coordinate carbamoyl phosphate: arginine 76 and threonine 77. An L-aspartate-binding site is contributed by lysine 104. Carbamoyl phosphate is bound by residues arginine 126, histidine 154, and glutamine 157. The L-aspartate site is built by arginine 187 and arginine 246. Positions 287 and 288 each coordinate carbamoyl phosphate.

This sequence belongs to the aspartate/ornithine carbamoyltransferase superfamily. ATCase family. In terms of assembly, heterododecamer (2C3:3R2) of six catalytic PyrB chains organized as two trimers (C3), and six regulatory PyrI chains organized as three dimers (R2).

It carries out the reaction carbamoyl phosphate + L-aspartate = N-carbamoyl-L-aspartate + phosphate + H(+). Its pathway is pyrimidine metabolism; UMP biosynthesis via de novo pathway; (S)-dihydroorotate from bicarbonate: step 2/3. Catalyzes the condensation of carbamoyl phosphate and aspartate to form carbamoyl aspartate and inorganic phosphate, the committed step in the de novo pyrimidine nucleotide biosynthesis pathway. In Dehalococcoides mccartyi (strain ATCC BAA-2100 / JCM 16839 / KCTC 5957 / BAV1), this protein is Aspartate carbamoyltransferase catalytic subunit.